Consider the following 636-residue polypeptide: Polyglycine hydrolase (636 aa).

The signal sequence occupies residues 1 to 22 (MHSLSLRRLLTSVLSLCSCSSA). N-linked (GlcNAc...) asparagine glycans are attached at residues N30 and N151. Residues C141 and C175 are joined by a disulfide bond. The active site involves S363. N-linked (GlcNAc...) asparagine glycans are attached at residues N383 and N481. The interval 512 to 540 (TEDRIVQESKNTGQDPVHPQSAKLVPGPH) is disordered.

Belongs to the peptidase S12 family.

It localises to the secreted. The enzyme catalyses a glycyl-glycyl-[protein] + H2O = N-terminal glycyl-[protein] + [protein]-C-terminal glycine. Functionally, serine-type endopeptidase that cleaves Gly-Gly bonds in the polyglycine linker of host plant class IV chitinases to disrupt their chitin-binding, and thereby plays a role in lowering the defense responses of the host to the fungus. Degrades Z.mays Endochitinase A (CHIA) in vitro, although corn is not its host species. In Fusarium vanettenii (strain ATCC MYA-4622 / CBS 123669 / FGSC 9596 / NRRL 45880 / 77-13-4) (Fusarium solani subsp. pisi), this protein is Polyglycine hydrolase.